We begin with the raw amino-acid sequence, 190 residues long: Peptide deformylase (190 aa).

Fe cation-binding residues include Cys94 and His136. The active site involves Glu137. His140 serves as a coordination point for Fe cation.

Belongs to the polypeptide deformylase family. Requires Fe(2+) as cofactor.

It catalyses the reaction N-terminal N-formyl-L-methionyl-[peptide] + H2O = N-terminal L-methionyl-[peptide] + formate. In terms of biological role, removes the formyl group from the N-terminal Met of newly synthesized proteins. Requires at least a dipeptide for an efficient rate of reaction. N-terminal L-methionine is a prerequisite for activity but the enzyme has broad specificity at other positions. In Chlorobium phaeovibrioides (strain DSM 265 / 1930) (Prosthecochloris vibrioformis (strain DSM 265)), this protein is Peptide deformylase.